The following is a 337-amino-acid chain: Glyceraldehyde-3-phosphate dehydrogenase 3, cytosolic (337 aa).

The segment at 1–151 (MAKIKIGING…YKSDINIVSN (151 aa)) is binding to NAD. NAD(+)-binding positions include 13-14 (RI), aspartate 35, and arginine 82. The catalytic stretch occupies residues 152-337 (ASCTTNCLAP…DLIRHMNSTK (186 aa)). D-glyceraldehyde 3-phosphate is bound by residues 153–155 (SCT), threonine 184, 213–214 (TG), and arginine 236. Cysteine 154 functions as the Nucleophile in the catalytic mechanism. Asparagine 318 lines the NAD(+) pocket.

The protein belongs to the glyceraldehyde-3-phosphate dehydrogenase family. Homotetramer.

The protein localises to the cytoplasm. It catalyses the reaction D-glyceraldehyde 3-phosphate + phosphate + NAD(+) = (2R)-3-phospho-glyceroyl phosphate + NADH + H(+). Its pathway is carbohydrate degradation; glycolysis; pyruvate from D-glyceraldehyde 3-phosphate: step 1/5. Key enzyme in glycolysis that catalyzes the first step of the pathway by converting D-glyceraldehyde 3-phosphate (G3P) into 3-phospho-D-glyceroyl phosphate. Essential for the maintenance of cellular ATP levels and carbohydrate metabolism. This chain is Glyceraldehyde-3-phosphate dehydrogenase 3, cytosolic (GAPC3), found in Zea mays (Maize).